Consider the following 372-residue polypeptide: Heat-inducible transcription repressor HrcA (372 aa).

The segment at tyrosine 300–isoleucine 334 is disordered.

Belongs to the HrcA family.

Its function is as follows. Negative regulator of class I heat shock genes (grpE-dnaK-dnaJ and groELS operons). Prevents heat-shock induction of these operons. This chain is Heat-inducible transcription repressor HrcA, found in Bifidobacterium longum (strain DJO10A).